The primary structure comprises 344 residues: Uroporphyrinogen decarboxylase (344 aa).

Substrate is bound by residues 26–30, Asp-76, Tyr-152, Ser-207, and His-323; that span reads RQAGR.

Belongs to the uroporphyrinogen decarboxylase family. Homodimer.

The protein localises to the cytoplasm. It carries out the reaction uroporphyrinogen III + 4 H(+) = coproporphyrinogen III + 4 CO2. Its pathway is porphyrin-containing compound metabolism; protoporphyrin-IX biosynthesis; coproporphyrinogen-III from 5-aminolevulinate: step 4/4. Catalyzes the decarboxylation of four acetate groups of uroporphyrinogen-III to yield coproporphyrinogen-III. This is Uroporphyrinogen decarboxylase from Hyphomonas neptunium (strain ATCC 15444).